A 184-amino-acid polypeptide reads, in one-letter code: Elongation factor P (184 aa).

Belongs to the elongation factor P family.

It localises to the cytoplasm. Its pathway is protein biosynthesis; polypeptide chain elongation. Involved in peptide bond synthesis. Stimulates efficient translation and peptide-bond synthesis on native or reconstituted 70S ribosomes in vitro. Probably functions indirectly by altering the affinity of the ribosome for aminoacyl-tRNA, thus increasing their reactivity as acceptors for peptidyl transferase. This Acidovorax ebreus (strain TPSY) (Diaphorobacter sp. (strain TPSY)) protein is Elongation factor P.